A 230-amino-acid polypeptide reads, in one-letter code: Uracil-DNA glycosylase (230 aa).

Asp70 (proton acceptor) is an active-site residue.

It belongs to the uracil-DNA glycosylase (UDG) superfamily. UNG family.

It localises to the cytoplasm. The enzyme catalyses Hydrolyzes single-stranded DNA or mismatched double-stranded DNA and polynucleotides, releasing free uracil.. In terms of biological role, excises uracil residues from the DNA which can arise as a result of misincorporation of dUMP residues by DNA polymerase or due to deamination of cytosine. The protein is Uracil-DNA glycosylase of Pseudomonas fluorescens (strain ATCC BAA-477 / NRRL B-23932 / Pf-5).